The sequence spans 29 residues: Varv peptide F (29 aa).

The segment at residues 1–29 is a cross-link (cyclopeptide (Gly-Asn)); it reads GVPICGETCTLGTCYTAGCSCSWPVCTRN. Cystine bridges form between C5/C19, C9/C21, and C14/C26.

Post-translationally, this is a cyclic peptide.

Functionally, probably participates in a plant defense mechanism. Has cytotoxic activity against a variety of drug-resistant and drug-sensitive human tumor cell lines. In Viola arvensis (European field pansy), this protein is Varv peptide F.